The primary structure comprises 148 residues: UPF0179 protein Ta1159 (148 aa).

Belongs to the UPF0179 family.

This chain is UPF0179 protein Ta1159, found in Thermoplasma acidophilum (strain ATCC 25905 / DSM 1728 / JCM 9062 / NBRC 15155 / AMRC-C165).